Reading from the N-terminus, the 57-residue chain is Small ribosomal subunit protein bS21 (57 aa).

The tract at residues 34–57 (RKEHYIKPSVQKKNRQKNMRSKKR) is disordered. Over residues 43–57 (VQKKNRQKNMRSKKR) the composition is skewed to basic residues.

Belongs to the bacterial ribosomal protein bS21 family.

This is Small ribosomal subunit protein bS21 from Aster yellows witches'-broom phytoplasma (strain AYWB).